The primary structure comprises 66 residues: Large ribosomal subunit protein bL35 (66 aa).

This sequence belongs to the bacterial ribosomal protein bL35 family.

This Thermodesulfovibrio yellowstonii (strain ATCC 51303 / DSM 11347 / YP87) protein is Large ribosomal subunit protein bL35.